The following is a 430-amino-acid chain: Glutamate-1-semialdehyde 2,1-aminomutase 2 (430 aa).

An N6-(pyridoxal phosphate)lysine modification is found at Lys-269.

This sequence belongs to the class-III pyridoxal-phosphate-dependent aminotransferase family. HemL subfamily. Homodimer. The cofactor is pyridoxal 5'-phosphate.

It localises to the cytoplasm. It carries out the reaction (S)-4-amino-5-oxopentanoate = 5-aminolevulinate. Its pathway is porphyrin-containing compound metabolism; protoporphyrin-IX biosynthesis; 5-aminolevulinate from L-glutamyl-tRNA(Glu): step 2/2. The chain is Glutamate-1-semialdehyde 2,1-aminomutase 2 from Bacillus pumilus (strain SAFR-032).